The following is a 626-amino-acid chain: Chaperone protein HtpG (626 aa).

An a; substrate-binding region spans residues 1 to 341 (METKQFKAES…SEDLSLNISR (341 aa)). Positions 342–552 (EILQHDRQLK…EGELSIEMEK (211 aa)) are b. Residues 490–509 (DLGIEGEEKENTSSSDDKEN) are disordered. Basic and acidic residues predominate over residues 498–509 (KENTSSSDDKEN). The segment at 553–626 (VLNAMPNNQN…FTNNICKIMK (74 aa)) is c.

Belongs to the heat shock protein 90 family. As to quaternary structure, homodimer.

Its subcellular location is the cytoplasm. Its function is as follows. Molecular chaperone. Has ATPase activity. This Clostridium botulinum (strain Loch Maree / Type A3) protein is Chaperone protein HtpG.